The primary structure comprises 579 residues: Folliculin (579 aa).

The segment at 32–52 (GASCGDSIGQGEQAEDEEMGI) is disordered. Positions 86–242 (RSLAAGHPGY…RNGNAARSLT (157 aa)) constitute a uDENN FLCN/SMCR8-type domain. Residues 337–491 (NMVQRRMGVF…ILNKIEAALS (155 aa)) form the cDENN FLCN/SMCR8-type domain. In terms of domain architecture, dDENN FLCN/SMCR8-type spans 493–558 (ENLSMDVVDQ…LLKFWMTGLS (66 aa)).

Belongs to the folliculin family. As to quaternary structure, component of the lysosomal folliculin complex (LFC).

Its subcellular location is the lysosome membrane. The protein resides in the cytoplasm. It localises to the cytosol. The protein localises to the cell projection. It is found in the cilium. Its subcellular location is the cytoskeleton. The protein resides in the microtubule organizing center. It localises to the centrosome. The protein localises to the spindle. It is found in the nucleus. With respect to regulation, GTPase-activating activity is inhibited in the folliculin complex (LFC), which stabilizes the GDP-bound state of RagA/RRAGA (or RagB/RRAGB), because Arg-164 is located far from the RagC/RRAGC or RagD/RRAGD nucleotide pocket. Disassembly of the LFC complex upon amino acid restimulation liberates the GTPase-activating activity. Functionally, multi-functional protein, involved in both the cellular response to amino acid availability and in the regulation of glycolysis. GTPase-activating protein that plays a key role in the cellular response to amino acid availability through regulation of the non-canonical mTORC1 signaling cascade controlling the MiT/TFE factors tfeb and tfe3. Activates mTORC1 by acting as a GTPase-activating protein: specifically stimulates GTP hydrolysis by RagC/RRAGC or RagD/RRAGD, promoting the conversion to the GDP-bound state of RagC/RRAGC or RagD/RRAGD, and thereby activating the kinase activity of mTORC1. The GTPase-activating activity is inhibited during starvation and activated in presence of nutrients. Acts as a key component for non-canonical mTORC1-dependent control of the MiT/TFE factors tfeb and tfe3, while it is not involved in mTORC1-dependent phosphorylation of canonical RPS6KB1/S6K1 and EIF4EBP1/4E-BP1. In low-amino acid conditions, the lysosomal folliculin complex (LFC) is formed on the membrane of lysosomes, which inhibits the GTPase-activating activity of flcn, inactivates mTORC1 and maximizes nuclear translocation of tfeb and tfe3. Upon amino acid restimulation, RagA/RRAGA (or RagB/RRAGB) nucleotide exchange promotes disassembly of the LFC complex and liberates the GTPase-activating activity of flcn, leading to activation of mTORC1 and subsequent cytoplasmic retention of tfeb and tfe3. Required for the exit of hematopoietic stem cell from pluripotency by promoting mTOR-dependent cytoplasmic retention of tfe3, thereby increasing Wnt signaling. Acts as an inhibitor of browning of adipose tissue by regulating mTOR-dependent cytoplasmic retention of tfe3. In response to flow stress, regulates STK11/LKB1 accumulation and mTORC1 activation through primary cilia. Required for starvation-induced perinuclear clustering of lysosomes by promoting association of rilp with its effector rab34. Involved in the control of embryonic stem cells differentiation; together with lamtor1 it is necessary to recruit and activate RagC/RRAGC and RagD/RRAGD at the lysosomes, and to induce exit of embryonic stem cells from pluripotency via non-canonical, mTOR-independent tfe3 inactivation. Regulates glycolysis by binding to lactate dehydrogenase ldha, acting as an uncompetitive inhibitor. This Xenopus tropicalis (Western clawed frog) protein is Folliculin.